The following is a 387-amino-acid chain: Alkanesulfonate monooxygenase (387 aa).

This sequence belongs to the SsuD family.

It catalyses the reaction an alkanesulfonate + FMNH2 + O2 = an aldehyde + FMN + sulfite + H2O + 2 H(+). In terms of biological role, catalyzes the desulfonation of aliphatic sulfonates. This is Alkanesulfonate monooxygenase from Ralstonia nicotianae (strain ATCC BAA-1114 / GMI1000) (Ralstonia solanacearum).